Here is a 1457-residue protein sequence, read N- to C-terminus: MDAAGEIQKVASMRLGGSMRGDSGSMWRRGDDVFSRSSREEDDEEALRWAALEKLPTYDRVRRAILPLGGDDGAGDGGGKGVVDVHGLGPRERRALLERLVRVADEDNEKFLLKLKDRVDRVGIDMPTIEVRFEHLEAEAEVRVGNSGLPTVLNSITNTLEEAGNALGILPNRKQTMPVLHDVSGIIKPRRMTLLLGPPGSGKTTLLLALAGRLGKDLKASGKVTYNGHGMEEFVPERTAAYISQHDLHIGEMTVRETLAFSARCQGVGSRFDMLTELSRREKAANIKPDADIDAFMKAAAMGGQEANVNTDYILKILGLEICADTMVGDEMLRGISGGQRKRVTTGEMLVGPARALFMDEISTGLDSSTTFQIVNSLRQTVHILGGTAVISLLQPAPETYNLFDDIILLSDGQIVYQGPREDVLEFFESMGFKCPDRKGVADFLQEVTSKKDQRQYWARHDKPYRFVTVKEFVSAFQSFHTGRAIANELAVPFDKSKSHPAALATTRYGAPGKELLKANIDREILLMKRNSFVYMFRTFQLMVVSLIAMTLFFRTKMKRDSVTSGGIYMGALFFGVLMIMFNGFSELALTVFKLPVFFKQRDLLFYPAWSYTIPSWILKIPITFIEVGGYVFLTYYVIGFDSNVGSFFKQYLLMLAINQMAGSLFRFIGGAARNMIVANVFASFMLLIFMVLGGFILAREQVKKWWIWGYWISPMMYAQNAISVNELMGHSWNKIVNSSASNETLGVQVLKSRGVFPEARWYWIGFGAMIGFTILFNALFTLALTYLRPYGNSRQSVSEEELKEKRANLNGEIVGDVHLSSGSTRRPMGNGTENDSTIVDDDTEVTQRGMVLPFTPLSLSFDNVRYSVDMPQEMKAQGVADDRLELLKGVSGSFRPGVLTALMGVSGAGKTTLMDVLAGRKTGGYIEGSINISGYPKKQETFARVSGYCEQNDIHSPQVTVYESLLFSAWLRLPEDVDSNTRKMFIEEVMELVELKSLRDALVGLPGVNGLSTEQRKRLTIAVELVANPSIIFMDEPTSGLDARAAAIVMRTVRNTVNTGRTVVCTIHQPSIDIFEAFDELFLMKRGGEEIYAGPLGHHSSELIKYFESIPGVSKIKDGYNPATWMLEVTTIGQEQALGVDFSDIYKKSELYQRNKALIKDLSQPAPDSSDLYFPTQYSQSSLTQCMACLWKQNLSYWRNPPYNAVRFFFTTVIALLFGTIFWDLGGKVTKSQDLFNAMGSMYAAVLFIGVMNCTSVQPVVAVERTVFYRERAAGMYSAFPYAFGQVVIEIPYTLVQATVYGIIVYAMIGFEWTAAKFFWYLFFMVFTLLYFTFYGMMAVGLTPNYHIASIVSSAFYAIWNLFSGFVIPRPRVPIWWRWYCWACPVAWTLYGLVVSQFGDIETPMEDGTPVKVFVENYFGFKHSWLGWVATVVAAFAFLFASLFGFAIMKFNFQKR.

The segment at 14 to 43 is disordered; sequence RLGGSMRGDSGSMWRRGDDVFSRSSREEDD. The span at 28–39 shows a compositional bias: basic and acidic residues; it reads RRGDDVFSRSSR. Residues 164–437 enclose the ABC transporter 1 domain; it reads GNALGILPNR…FESMGFKCPD (274 aa). 197 to 204 serves as a coordination point for ATP; the sequence is GPPGSGKT. Residues 515–728 enclose the ABC transmembrane type-2 1 domain; that stretch reads ELLKANIDRE…AQNAISVNEL (214 aa). The next 7 helical transmembrane spans lie at 533-553, 565-585, 621-641, 653-673, 677-697, 706-726, and 765-785; these read FVYM…MTLF, SGGI…FNGF, IPIT…VIGF, LLML…GGAA, IVAN…GGFI, WWIW…ISVN, and IGFG…TLAL. The tract at residues 821–841 is disordered; that stretch reads SSGSTRRPMGNGTENDSTIVD. The ABC transporter 2 domain occupies 860–1112; the sequence is LSFDNVRYSV…ELIKYFESIP (253 aa). 905–912 is an ATP binding site; sequence GVSGAGKT. The 215-residue stretch at 1185-1399 folds into the ABC transmembrane type-2 2 domain; that stretch reads TQCMACLWKQ…TLYGLVVSQF (215 aa). 7 consecutive transmembrane segments (helical) span residues 1209-1229, 1244-1264, 1292-1312, 1319-1339, 1349-1369, 1380-1400, and 1429-1449; these read FFFT…LGGK, YAAV…VVAV, IPYT…MIGF, FFWY…YGMM, IASI…GFVI, WYCW…SQFG, and WVAT…GFAI.

It belongs to the ABC transporter superfamily. ABCG family. PDR (TC 3.A.1.205) subfamily.

Its subcellular location is the membrane. In terms of biological role, may be a general defense protein. The chain is ABC transporter G family member 36 from Oryza sativa subsp. japonica (Rice).